Here is a 102-residue protein sequence, read N- to C-terminus: DET1- and DDB1-associated protein 1 (102 aa).

The tract at residues 67–102 is disordered; that stretch reads NAAKKRDQEQVEIEGENSAPPRKIARTDSQDMNEDT.

This sequence belongs to the DDA1 family. In terms of assembly, component of numerous DCX (DDB1-CUL4-X-box) E3 ubiquitin-protein ligase complexes which consist of a core of DDB1, cullin-4 (CUL4A or CUL4B), DDA1 and RBX1.

It participates in protein modification; protein ubiquitination. Functions as a component of numerous distinct DCX (DDB1-CUL4-X-box) E3 ubiquitin-protein ligase complexes which mediate the ubiquitination and subsequent proteasomal degradation of target proteins. In the DCX complexes, acts as a scaffolding subunit required to stabilize the complex. This chain is DET1- and DDB1-associated protein 1, found in Gallus gallus (Chicken).